The following is a 182-amino-acid chain: Ribosome-recycling factor (182 aa).

The interval 136–156 (VKKQEKDGDFSEDQSRDEQDS) is disordered.

This sequence belongs to the RRF family.

It is found in the cytoplasm. In terms of biological role, responsible for the release of ribosomes from messenger RNA at the termination of protein biosynthesis. May increase the efficiency of translation by recycling ribosomes from one round of translation to another. In Synechococcus sp. (strain CC9902), this protein is Ribosome-recycling factor.